A 329-amino-acid polypeptide reads, in one-letter code: Ketol-acid reductoisomerase (NADP(+)) (329 aa).

The KARI N-terminal Rossmann domain maps to 1-181 (MKVYYEQDAN…GGTRSGVIET (181 aa)). NADP(+) is bound by residues 24 to 27 (YGSQ), R47, and 82 to 85 (DQYQ). H107 is an active-site residue. G133 contributes to the NADP(+) binding site. The KARI C-terminal knotted domain maps to 182-327 (TFREETETDL…ARLRSMMPWL (146 aa)). 4 residues coordinate Mg(2+): D190, E194, E226, and E230. S251 provides a ligand contact to substrate.

It belongs to the ketol-acid reductoisomerase family. It depends on Mg(2+) as a cofactor.

The enzyme catalyses (2R)-2,3-dihydroxy-3-methylbutanoate + NADP(+) = (2S)-2-acetolactate + NADPH + H(+). It catalyses the reaction (2R,3R)-2,3-dihydroxy-3-methylpentanoate + NADP(+) = (S)-2-ethyl-2-hydroxy-3-oxobutanoate + NADPH + H(+). It functions in the pathway amino-acid biosynthesis; L-isoleucine biosynthesis; L-isoleucine from 2-oxobutanoate: step 2/4. It participates in amino-acid biosynthesis; L-valine biosynthesis; L-valine from pyruvate: step 2/4. Its function is as follows. Involved in the biosynthesis of branched-chain amino acids (BCAA). Catalyzes an alkyl-migration followed by a ketol-acid reduction of (S)-2-acetolactate (S2AL) to yield (R)-2,3-dihydroxy-isovalerate. In the isomerase reaction, S2AL is rearranged via a Mg-dependent methyl migration to produce 3-hydroxy-3-methyl-2-ketobutyrate (HMKB). In the reductase reaction, this 2-ketoacid undergoes a metal-dependent reduction by NADPH to yield (R)-2,3-dihydroxy-isovalerate. The chain is Ketol-acid reductoisomerase (NADP(+)) from Oleidesulfovibrio alaskensis (strain ATCC BAA-1058 / DSM 17464 / G20) (Desulfovibrio alaskensis).